The primary structure comprises 127 residues: Protein ApaG (127 aa).

The ApaG domain occupies D3 to H127.

This chain is Protein ApaG, found in Acidithiobacillus ferrooxidans (strain ATCC 23270 / DSM 14882 / CIP 104768 / NCIMB 8455) (Ferrobacillus ferrooxidans (strain ATCC 23270)).